Reading from the N-terminus, the 100-residue chain is Small ribosomal subunit protein uS14c (100 aa).

The protein belongs to the universal ribosomal protein uS14 family. As to quaternary structure, part of the 30S ribosomal subunit.

Its subcellular location is the plastid. The protein localises to the chloroplast. In terms of biological role, binds 16S rRNA, required for the assembly of 30S particles. This Mesostigma viride (Green alga) protein is Small ribosomal subunit protein uS14c.